We begin with the raw amino-acid sequence, 240 residues long: Ribonuclease PH (240 aa).

Phosphate is bound by residues R87 and 125–127 (GTR).

It belongs to the RNase PH family. Homohexameric ring arranged as a trimer of dimers.

It carries out the reaction tRNA(n+1) + phosphate = tRNA(n) + a ribonucleoside 5'-diphosphate. Phosphorolytic 3'-5' exoribonuclease that plays an important role in tRNA 3'-end maturation. Removes nucleotide residues following the 3'-CCA terminus of tRNAs; can also add nucleotides to the ends of RNA molecules by using nucleoside diphosphates as substrates, but this may not be physiologically important. Probably plays a role in initiation of 16S rRNA degradation (leading to ribosome degradation) during starvation. In Pseudomonas putida (strain ATCC 47054 / DSM 6125 / CFBP 8728 / NCIMB 11950 / KT2440), this protein is Ribonuclease PH.